Here is an 82-residue protein sequence, read N- to C-terminus: Large ribosomal subunit protein uL23 (82 aa).

It belongs to the universal ribosomal protein uL23 family. In terms of assembly, part of the 50S ribosomal subunit. Contacts protein L29.

Its function is as follows. Binds to 23S rRNA. One of the proteins that surrounds the polypeptide exit tunnel on the outside of the ribosome. This chain is Large ribosomal subunit protein uL23, found in Sulfurisphaera tokodaii (strain DSM 16993 / JCM 10545 / NBRC 100140 / 7) (Sulfolobus tokodaii).